A 963-amino-acid chain; its full sequence is MDAPWGAGERWLHGAAVDRSGVSLGPPPTPQVNQGTLGPQVAPVAAGEVVKTAGGVCKFSGQRLSWWQAQESCEQQFGHLALQPPDGVLASRLRDPVWVGQREAPLRRPPQRRARTTAVLVFDERTADRAARLRSPLPELAALTACTHVQWDCASPDPAALFSVAAPALPNALQLRAFAEPGGVVRAALVVRGQHAPFLAAFRADGRWHHVCATWEQRGGRWALFSDGRRRAGARGLGAGHPVPSGGILVLGQDQDSLGGGFSVRHALSGNLTDFHLWARALSPAQLHRARACAPPSEGLLFRWDPGALDVTPSLLPTVWVRLLCPVPSEECPTWNPGPRSEGSELCLEPQPFLCCYRTEPYRRLQDAQSWPGQDVISRVNALANDIVLLPDPLSEVHGALSPAEASSFLGLLEHVLAMEMAPLGPAALLAVVRFLKRVVALGAGDPELLLTGPWEQLSQGVVSVASLVLEEQVADTWLSLREVIGGPMALVASVQRLAPLLSTSMTSERPRMRIQHRHAGLSGVTVIHSWFTSRVFQHTLEGPDLEPQAPASSEEANRVQRFLSTQVGSAIISSEVWDVTGEVNVAMTFHLQHRAQSPLFPPHPPSPYTGGAWATTGCSVAALYLDSTACFCNHSTSFAILLQIYEVQRGPEEESLLRTLSFVGCGVSFCALTTTFLLFLVAGVPKSERTTVHKNLTFSLASAEGFLMTSEWAKANEVACVAVTVAMHFLFLVAFSWMLVEGLLLWRKVVAVSMHPGPGMRLYHATGWGVPVGIVAVTLAMLPHDYVAPGHCWLNVHTNAIWAFVGPVLFVLTANTCILARVVMITVSSARRRARMLSPQPCLQQQIWTQIWATVKPVLVLLPVLGLTWLAGILVHLSPAWAYAAVGLNSIQGLYIFLVYAACNEEVRSALQRMAEKKVAEVLRALGVWGGAAKEHSLPFSVLPLFLPPKPSTPRHPLKAPA.

Residues 1 to 662 (MDAPWGAGER…EEESLLRTLS (662 aa)) lie on the Extracellular side of the membrane. Positions 18-38 (DRSGVSLGPPPTPQVNQGTLG) are disordered. Positions 116 to 325 (TTAVLVFDER…LPTVWVRLLC (210 aa)) constitute a Pentraxin (PTX) domain. Cys-146 and Cys-212 are oxidised to a cystine. Asn-271 is a glycosylation site (N-linked (GlcNAc...) asparagine). Residues 489–649 (MALVASVQRL…AILLQIYEVQ (161 aa)) enclose the GAIN-B domain. Residues 599 to 649 (PLFPPHPPSPYTGGAWATTGCSVAALYLDSTACFCNHSTSFAILLQIYEVQ) form a GPS region. Cys-619 and Cys-633 are oxidised to a cystine. Residue Asn-634 is glycosylated (N-linked (GlcNAc...) asparagine). A helical membrane pass occupies residues 663–683 (FVGCGVSFCALTTTFLLFLVA). Residues 684–691 (GVPKSERT) are Cytoplasmic-facing. The helical transmembrane segment at 692-712 (TVHKNLTFSLASAEGFLMTSE) threads the bilayer. Residues 713 to 720 (WAKANEVA) are Extracellular-facing. Residues 721–741 (CVAVTVAMHFLFLVAFSWMLV) form a helical membrane-spanning segment. The Cytoplasmic portion of the chain corresponds to 742 to 762 (EGLLLWRKVVAVSMHPGPGMR). The chain crosses the membrane as a helical span at residues 763–783 (LYHATGWGVPVGIVAVTLAML). At 784–800 (PHDYVAPGHCWLNVHTN) the chain is on the extracellular side. The helical transmembrane segment at 801 to 821 (AIWAFVGPVLFVLTANTCILA) threads the bilayer. At 822–857 (RVVMITVSSARRRARMLSPQPCLQQQIWTQIWATVK) the chain is on the cytoplasmic side. A helical membrane pass occupies residues 858–878 (PVLVLLPVLGLTWLAGILVHL). Residues 879 to 880 (SP) lie on the Extracellular side of the membrane. The helical transmembrane segment at 881 to 901 (AWAYAAVGLNSIQGLYIFLVY) threads the bilayer. Residues 902 to 963 (AACNEEVRSA…TPRHPLKAPA (62 aa)) lie on the Cytoplasmic side of the membrane.

Belongs to the G-protein coupled receptor 2 family. Adhesion G-protein coupled receptor (ADGR) subfamily.

The protein localises to the membrane. Its function is as follows. Orphan receptor. This is Adhesion G protein-coupled receptor D2 (ADGRD2) from Homo sapiens (Human).